The sequence spans 274 residues: Large ribosomal subunit protein uL2 (274 aa).

Disordered stretches follow at residues 35–60 (EPQH…GHKH) and 224–274 (VMNP…RRKK). Positions 50-60 (TTRHKGGGHKH) are enriched in basic residues. The span at 229-246 (DHPHGGGEGKTGEGRHAV) shows a compositional bias: basic and acidic residues.

It belongs to the universal ribosomal protein uL2 family. In terms of assembly, part of the 50S ribosomal subunit. Forms a bridge to the 30S subunit in the 70S ribosome.

Functionally, one of the primary rRNA binding proteins. Required for association of the 30S and 50S subunits to form the 70S ribosome, for tRNA binding and peptide bond formation. It has been suggested to have peptidyltransferase activity; this is somewhat controversial. Makes several contacts with the 16S rRNA in the 70S ribosome. In Delftia acidovorans (strain DSM 14801 / SPH-1), this protein is Large ribosomal subunit protein uL2.